The chain runs to 145 residues: Protoporphyrinogen IX oxidase (145 aa).

The next 4 membrane-spanning stretches (helical) occupy residues 6–26 (LWFK…LLYL), 61–81 (AMIS…FVAL), 83–103 (TWFQ…GLLA), and 123–143 (IVNE…IVKP). His12 lines the heme pocket. Lys88 contacts heme.

It belongs to the HemJ family. Homodimer. The cofactor is heme b.

It is found in the cell membrane. It catalyses the reaction protoporphyrinogen IX + 3 A = protoporphyrin IX + 3 AH2. It functions in the pathway porphyrin-containing compound metabolism; protoporphyrin-IX biosynthesis; protoporphyrin-IX from protoporphyrinogen-IX: step 1/1. Catalyzes the oxidation of protoporphyrinogen IX to protoporphyrin IX. Is involved in the biosynthesis of tetrapyrrole molecules like heme. Does not use oxygen or artificial electron acceptors such as menadione or benzoquinone. This Rickettsia prowazekii (strain Madrid E) protein is Protoporphyrinogen IX oxidase.